Here is a 358-residue protein sequence, read N- to C-terminus: Starch-binding domain-containing protein 1 (358 aa).

The Extracellular portion of the chain corresponds to 1 to 6 (MGAVWS). A helical membrane pass occupies residues 7–23 (ALLVGGGLAGALFVWLL). Topologically, residues 24–358 (RGGPGDTGKD…KVVHAWWGIH (335 aa)) are cytoplasmic. Over residues 30–42 (TGKDGDAEQEKDA) the composition is skewed to basic and acidic residues. 2 disordered regions span residues 30-70 (TGKD…QELV) and 104-151 (SREV…SPMG). A compositionally biased stretch (low complexity) spans 50 to 66 (PGGHQSGSSGLSPGPSG). The residue at position 65 (Ser-65) is a Phosphoserine. The segment covering 106 to 115 (EVCDNSREHV) has biased composition (basic and acidic residues). Ser-117 is subject to Phosphoserine. Residues 126-140 (PATSETSNSRSYSEV) show a composition bias toward polar residues. Residues Ser-148, Ser-175, Ser-188, and Ser-194 each carry the phosphoserine modification. An LIR motif is present at residues 200 to 206 (HEEWEMV). Phosphoserine occurs at positions 210, 211, and 220. The CBM20 domain occupies 258–357 (PAGSQQVSVR…DKVVHAWWGI (100 aa)).

In terms of assembly, interacts with the ATG8 family proteins GABARAP and GABARAPL1. Interacts with several glycogen-associated proteins, such as GYS2 (liver glycogen synthase), GDE (glycogen debranching enzyme), GBE1 (glycogen branching enzyme 1) and EPM2A (Laforin). In terms of processing, ubiquitinated, which leads to proteasomal degradation. As to expression, expressed at high level in skeletal and cardiac muscles. Moderately expressed in liver and placenta. No expression is found in pancreas, kidney or lung. Present in skeletal muscle, heart and placenta (at protein level).

The protein resides in the preautophagosomal structure membrane. The protein localises to the endoplasmic reticulum membrane. It localises to the cell membrane. Its subcellular location is the sarcolemma. It is found in the T-tubule. Its function is as follows. Acts as a cargo receptor for glycogen. Delivers its cargo to an autophagic pathway called glycophagy, resulting in the transport of glycogen to lysosomes. This is Starch-binding domain-containing protein 1 from Homo sapiens (Human).